Consider the following 241-residue polypeptide: 1-(5-phosphoribosyl)-5-[(5-phosphoribosylamino)methylideneamino] imidazole-4-carboxamide isomerase (241 aa).

Residue Asp-8 is the Proton acceptor of the active site. Asp-130 acts as the Proton donor in catalysis.

Belongs to the HisA/HisF family.

The protein localises to the cytoplasm. It catalyses the reaction 1-(5-phospho-beta-D-ribosyl)-5-[(5-phospho-beta-D-ribosylamino)methylideneamino]imidazole-4-carboxamide = 5-[(5-phospho-1-deoxy-D-ribulos-1-ylimino)methylamino]-1-(5-phospho-beta-D-ribosyl)imidazole-4-carboxamide. It participates in amino-acid biosynthesis; L-histidine biosynthesis; L-histidine from 5-phospho-alpha-D-ribose 1-diphosphate: step 4/9. This is 1-(5-phosphoribosyl)-5-[(5-phosphoribosylamino)methylideneamino] imidazole-4-carboxamide isomerase from Flavobacterium psychrophilum (strain ATCC 49511 / DSM 21280 / CIP 103535 / JIP02/86).